The sequence spans 243 residues: Secreted RxLR effector protein 28 (243 aa).

The signal sequence occupies residues Met-1–Ala-26. The short motif at Arg-49–Arg-52 is the RxLR element. Residues Asn-187–Glu-243 are disordered. The span at Ser-199–Gly-216 shows a compositional bias: low complexity.

Belongs to the RxLR effector family.

It localises to the secreted. Its subcellular location is the host cytoplasm. The protein resides in the host nucleus. Functionally, effector that significantly enhances susceptibilities of grapevine and tobacco to pathogens. Acts as a broad suppressor of cell death to interrupt plant immunity. Completely inhibits cell death induced by cell death-inducing proteins, including the PAMP elicitor INF1 from P.infestans. Reduces the transcriptional levels of the defense-related genes and impairs the H(2)O(2) accumulation in N.benthamiana. The chain is Secreted RxLR effector protein 28 from Plasmopara viticola (Downy mildew of grapevine).